A 234-amino-acid chain; its full sequence is Enolase-phosphatase E1 (234 aa).

2 residues coordinate Mg(2+): D10 and E12. Substrate-binding positions include 125–126 and K162; that span reads SS. D188 serves as a coordination point for Mg(2+).

The protein belongs to the HAD-like hydrolase superfamily. MasA/MtnC family. As to quaternary structure, monomer. Mg(2+) is required as a cofactor.

It localises to the cytoplasm. The protein resides in the nucleus. It carries out the reaction 5-methylsulfanyl-2,3-dioxopentyl phosphate + H2O = 1,2-dihydroxy-5-(methylsulfanyl)pent-1-en-3-one + phosphate. Its pathway is amino-acid biosynthesis; L-methionine biosynthesis via salvage pathway; L-methionine from S-methyl-5-thio-alpha-D-ribose 1-phosphate: step 3/6. It participates in amino-acid biosynthesis; L-methionine biosynthesis via salvage pathway; L-methionine from S-methyl-5-thio-alpha-D-ribose 1-phosphate: step 4/6. In terms of biological role, bifunctional enzyme that catalyzes the enolization of 2,3-diketo-5-methylthiopentyl-1-phosphate (DK-MTP-1-P) into the intermediate 2-hydroxy-3-keto-5-methylthiopentenyl-1-phosphate (HK-MTPenyl-1-P), which is then dephosphorylated to form the acireductone 1,2-dihydroxy-3-keto-5-methylthiopentene (DHK-MTPene). This Sordaria macrospora (strain ATCC MYA-333 / DSM 997 / K(L3346) / K-hell) protein is Enolase-phosphatase E1.